The sequence spans 483 residues: Bifunctional pantoate ligase/cytidylate kinase (483 aa).

A pantoate--beta-alanine ligase region spans residues 1–246; sequence MPTMGALHAG…CGSTRLIDHA (246 aa). Position 4 to 11 (4 to 11) interacts with ATP; the sequence is MGALHAGH. Histidine 11 functions as the Proton donor in the catalytic mechanism. (R)-pantoate is bound at residue glutamine 34. Glutamine 34 provides a ligand contact to beta-alanine. 124–127 contributes to the ATP binding site; the sequence is GEKD. Glutamine 130 lines the (R)-pantoate pocket. Residues valine 153 and 161-164 contribute to the ATP site; that span reads LSSR. Residues 247–483 form a cytidylate kinase region; that stretch reads FLMTRQPLVA…AEEAWPTPQR (237 aa).

The protein in the N-terminal section; belongs to the pantothenate synthetase family. This sequence in the C-terminal section; belongs to the cytidylate kinase family. Type 1 subfamily.

It is found in the cytoplasm. It catalyses the reaction (R)-pantoate + beta-alanine + ATP = (R)-pantothenate + AMP + diphosphate + H(+). The enzyme catalyses CMP + ATP = CDP + ADP. It carries out the reaction dCMP + ATP = dCDP + ADP. Its pathway is cofactor biosynthesis; (R)-pantothenate biosynthesis; (R)-pantothenate from (R)-pantoate and beta-alanine: step 1/1. In terms of biological role, catalyzes the condensation of pantoate with beta-alanine in an ATP-dependent reaction via a pantoyl-adenylate intermediate. Catalyzes the transfer of a phosphate group from ATP to either CMP or dCMP to form CDP or dCDP and ADP, respectively. This chain is Bifunctional pantoate ligase/cytidylate kinase, found in Synechococcus sp. (strain CC9902).